Reading from the N-terminus, the 142-residue chain is Peptide methionine sulfoxide reductase MsrB (142 aa).

The region spanning 3-126 (KEKLKKKLSL…NSAALRFVPF (124 aa)) is the MsrB domain. The Nucleophile role is filled by C115.

This sequence belongs to the MsrB Met sulfoxide reductase family.

The catalysed reaction is L-methionyl-[protein] + [thioredoxin]-disulfide + H2O = L-methionyl-(R)-S-oxide-[protein] + [thioredoxin]-dithiol. The protein is Peptide methionine sulfoxide reductase MsrB of Lactococcus lactis subsp. lactis (strain IL1403) (Streptococcus lactis).